The sequence spans 218 residues: MPMTLGYWDVRGLALPIRMLLEYTDTSYEEKKYTMGDAPNYDQSKWLSEKFTLGLDFPNLPYLIDGTHKLTQSNAILRYLARKHGLCGETEEERIRVDILENQLMDNRFQLVNVCYSPDFEKLKPEYLKGLPEKLQLYSQFLGSLPWFAGDKITFADFLVYDVLDQNRIFVPGCLDAFPNLKDFHVRFEGLPKISAYMKSSRFIRVPVFLKKATWTGI.

In terms of domain architecture, GST N-terminal spans 2-88 (PMTLGYWDVR…YLARKHGLCG (87 aa)). Residues 7 to 8 (YW), 46 to 50 (WLSEK), 59 to 60 (NL), and 72 to 73 (QS) each bind glutathione. The region spanning 90-208 (TEEERIRVDI…KSSRFIRVPV (119 aa)) is the GST C-terminal domain. Position 116 (Y116) interacts with substrate.

Belongs to the GST superfamily. Mu family. As to quaternary structure, homodimer. In terms of tissue distribution, well expressed in rabbit liver, brain and kidney.

The protein localises to the cytoplasm. It carries out the reaction RX + glutathione = an S-substituted glutathione + a halide anion + H(+). Conjugation of reduced glutathione to a wide number of exogenous and endogenous hydrophobic electrophiles. The protein is Glutathione S-transferase Mu 1 of Oryctolagus cuniculus (Rabbit).